We begin with the raw amino-acid sequence, 161 residues long: Lincosamide resistance protein (161 aa).

The chain is Lincosamide resistance protein (linA) from Staphylococcus haemolyticus.